The following is a 256-amino-acid chain: Probable hydroxyacylglutathione hydrolase glo2 (256 aa).

Residues H63, H65, D67, H68, H118, and D139 each contribute to the Zn(2+) site. Residues R148, 178–180 (HEY), and 250–253 (RDMK) contribute to the substrate site. A Zn(2+)-binding site is contributed by H178.

Belongs to the metallo-beta-lactamase superfamily. Glyoxalase II family. The cofactor is Zn(2+).

Its subcellular location is the cytoplasm. It is found in the nucleus. The enzyme catalyses an S-(2-hydroxyacyl)glutathione + H2O = a 2-hydroxy carboxylate + glutathione + H(+). It catalyses the reaction (R)-S-lactoylglutathione + H2O = (R)-lactate + glutathione + H(+). It participates in secondary metabolite metabolism; methylglyoxal degradation; (R)-lactate from methylglyoxal: step 2/2. In terms of biological role, thiolesterase that catalyzes the hydrolysis of S-D-lactoylglutathione to form glutathione and D-lactic acid. Involved in the metabolism of methylglyoxal, a toxic compound for yeast proliferation, by converting methylglyoxal to lactate via S-D-lactoylglutathione by sequential enzyme reactions catalyzed by glyoxalase I and glyoxalase II. This is Probable hydroxyacylglutathione hydrolase glo2 (glo2) from Schizosaccharomyces pombe (strain 972 / ATCC 24843) (Fission yeast).